The following is a 464-amino-acid chain: Soluble pyridine nucleotide transhydrogenase (464 aa).

35-44 (DDRPQVGGNC) provides a ligand contact to FAD.

Belongs to the class-I pyridine nucleotide-disulfide oxidoreductase family. FAD serves as cofactor.

It is found in the cytoplasm. It catalyses the reaction NAD(+) + NADPH = NADH + NADP(+). In terms of biological role, conversion of NADPH, generated by peripheral catabolic pathways, to NADH, which can enter the respiratory chain for energy generation. The polypeptide is Soluble pyridine nucleotide transhydrogenase (Azotobacter vinelandii (strain DJ / ATCC BAA-1303)).